The sequence spans 532 residues: MKKIMLIASAMSALSLPFSASAIELEDEVGLECGPYAKVGVVGGMITGAESTRLDSTDSEGKKHLSLTTGLPFGGTLAAGMTIAPGFRAELGVMYLRNISAEVEVGKGEVDSKGEIKADSGGGTDAPIRKPFKLTPPQPTMMPISIADRDFGIDIPNIPQAQAQAAQPPLNDQKRAAARIAWLKNCAGIDYMVKDPNNPGHMMVNPVLLNIPQGNPNPVGQPPQRANQPANFAIHNHEQWRSLVVGLAALSNANKPSASPVKVLSDKIIQIYSDIKPFADIAGINVPDTGLPNSASIEQIQSKIQELGDTLEELRDSFDGYINNAFVNQIHLNFVMPPQAQQQQGQGQQQQAQATAQEAVAAAAVRLLNGSDQIAQLYKDLVKLQRHAGIRKAMEKLAAQQEEDAKNQGKGDCKQQQGASEKSKEGKVKETEFDLSMVVGQVKLYADLVTTESFSIYGGVGAGLAYTYGKIDNKDVKGYTGMVASGALGVAINAAEGVCVDLEAGYMHSFSKVEDKYQVNAFIASACVRYNF.

Residues 1-22 (MKKIMLIASAMSALSLPFSASA) form the signal peptide. The helical transmembrane segment at 67–87 (LTTGLPFGGTLAAGMTIAPGF) threads the bilayer. Disordered stretches follow at residues 113–140 (KGEI…PQPT) and 400–426 (QQEE…SKEG). Residues 403 to 413 (EDAKNQGKGDC) show a composition bias toward basic and acidic residues. The chain crosses the membrane as a helical span at residues 480–500 (TGMVASGALGVAINAAEGVCV).

It is found in the cell membrane. Its function is as follows. May be an adherent factor for rickettsial adsorption to the host-cell surface and a determinant of virulence of individual rickettsial strain. It is the major outer membrane protein. This is 56 kDa type-specific antigen from Orientia tsutsugamushi (Rickettsia tsutsugamushi).